Here is a 265-residue protein sequence, read N- to C-terminus: R-spondin-1 (265 aa).

Residues 1-20 (MRLGLCVVALVLSWTHIAVG) form the signal peptide. FU repeat units follow at residues 34-85 (AEGS…GYFD) and 91-135 (MNKC…GSTA). 11 cysteine pairs are disulfide-bonded: cysteine 40–cysteine 47, cysteine 44–cysteine 53, cysteine 56–cysteine 75, cysteine 79–cysteine 94, cysteine 97–cysteine 105, cysteine 102–cysteine 111, cysteine 114–cysteine 125, cysteine 129–cysteine 142, cysteine 148–cysteine 190, cysteine 159–cysteine 166, and cysteine 199–cysteine 206. Asparagine 137 carries an N-linked (GlcNAc...) asparagine glycan. In terms of domain architecture, TSP type-1 spans 147–207 (QCEMSEWSPW…KCTVRRTPCP (61 aa)). C-linked (Man) tryptophan glycosylation is present at tryptophan 153. C-linked (Man) tryptophan; by DPY19L3 glycosylation is present at tryptophan 156. 2 disordered regions span residues 173-192 (EERTRRVLHAPGGDHTTCSD) and 201-265 (VRRT…TWAQ). A compositionally biased stretch (low complexity) spans 245 to 257 (QQQPQPGTTGPLT).

The protein belongs to the R-spondin family. In terms of assembly, interacts with ZNRF3; promoting indirect interaction between ZNRF3 and LGR4 and membrane clearance of ZNRF3. Identified in a complex composed of RNF43, LGR5 and RSPO1. Interacts with the extracellular domain of FZD8 and LRP6. It however does not form a ternary complex with FZD8 and LRP6. Interacts with WNT1. Binds heparin. Interacts with LGR4, LGR5 and LGR6. Interacts (via FU repeats) with KREM1. In terms of processing, C-, and N-glycosylated. N-glycosylation at Asn-137, negatively influences its secretion and enhancing effect on Wnt/beta-catenin signaling. C-mannosylation at Trp-156 by DPY19L3 is required for its secretion an regulates the enhancing activity of Wnt signaling. As to expression, expressed in the dorsal part of the neural tube on 10 and 12 dpc, especially in the boundary region between roof plate and neuroepithelium. This expression is enhanced in the rostral part. Also expressed in other tissues such as truncal region neighboring forelimbs and mesenchymal tissues around the nasal cavity.

It localises to the secreted. It is found in the nucleus. In terms of biological role, activator of the canonical Wnt signaling pathway by acting as a ligand for LGR4-6 receptors. Upon binding to LGR4-6 (LGR4, LGR5 or LGR6), LGR4-6 associate with phosphorylated LRP6 and frizzled receptors that are activated by extracellular Wnt receptors, triggering the canonical Wnt signaling pathway to increase expression of target genes. Also regulates the canonical Wnt/beta-catenin-dependent pathway and non-canonical Wnt signaling by acting as an inhibitor of ZNRF3, an important regulator of the Wnt signaling pathway. Acts as a ligand for frizzled FZD8 and LRP6. May negatively regulate the TGF-beta pathway. Has a essential roles in ovary determination. Regulates Wnt signaling by antagonizing DKK1/KREM1-mediated internalization of LRP6 through an interaction with KREM1. The chain is R-spondin-1 (Rspo1) from Mus musculus (Mouse).